Reading from the N-terminus, the 314-residue chain is Ribosomal protein uL3 glutamine methyltransferase (314 aa).

It belongs to the protein N5-glutamine methyltransferase family. PrmB subfamily.

It catalyses the reaction L-glutaminyl-[ribosomal protein uL3] + S-adenosyl-L-methionine = N(5)-methyl-L-glutaminyl-[ribosomal protein uL3] + S-adenosyl-L-homocysteine + H(+). Functionally, methylates large ribosomal subunit protein uL3 on a specific glutamine residue. The sequence is that of Ribosomal protein uL3 glutamine methyltransferase from Shewanella oneidensis (strain ATCC 700550 / JCM 31522 / CIP 106686 / LMG 19005 / NCIMB 14063 / MR-1).